A 1045-amino-acid chain; its full sequence is Mitotic deacetylase-associated SANT domain protein (1045 aa).

Met-1 carries the post-translational modification N-acetylmethionine. Disordered regions lie at residues 1 to 68 (MNLQ…PPPS) and 99 to 159 (NSVM…PTYY). Residues 132–146 (STWNCHSLSLYSATK) are compositionally biased toward polar residues. A Glycyl lysine isopeptide (Lys-Gly) (interchain with G-Cter in SUMO2) cross-link involves residue Lys-166. Asymmetric dimethylarginine is present on Arg-193. 5 disordered regions span residues 228-264 (QVFRQGPPPPNPVAAFPPQKQQQQQQPQQQQQQQQAA), 276-305 (SMPQQPSQQPQDFGLQPAGPLGQSHLAHHS), 330-349 (APQPALPQVQIPFPRRSRRL), 378-397 (HHWPLQQPPPGSLGQPHPEA), and 410-441 (LPDGERLAPNGREREAPAMGSEEGMRAVSTGD). Low complexity predominate over residues 240-264 (VAAFPPQKQQQQQQPQQQQQQQQAA). Over residues 412-425 (DGERLAPNGREREA) the composition is skewed to basic and acidic residues. At Arg-447 the chain carries Omega-N-methylarginine. Residue Ser-461 is modified to Phosphoserine. Residues 543–563 (QAGGLDEDGKGPEQNPAEHKP) are disordered. Basic and acidic residues predominate over residues 549–563 (EDGKGPEQNPAEHKP). Lys-590 is covalently cross-linked (Glycyl lysine isopeptide (Lys-Gly) (interchain with G-Cter in SUMO1); alternate). Residue Lys-590 forms a Glycyl lysine isopeptide (Lys-Gly) (interchain with G-Cter in SUMO2); alternate linkage. The residue at position 655 (Thr-655) is a Phosphothreonine. Ser-661 bears the Phosphoserine mark. Thr-704 carries the phosphothreonine modification. Ser-709 is subject to Phosphoserine. Thr-715 carries the phosphothreonine modification. The region spanning 721–813 (PRINVGSRFQ…ETLNKLLLKK (93 aa)) is the ELM2 domain. The 52-residue stretch at 828-879 (TGSDQWKMAERKLFNKGIAIYKKDFFLVQKLIQTKTVAQCVEFYYTYKKQVK) folds into the SANT domain. The disordered stretch occupies residues 887–1045 (TFGDVDTSDE…NTFPCKKCGR (159 aa)). Composition is skewed to basic and acidic residues over residues 894–909 (SDEKSAQEEVEVDIKT) and 919–942 (PRRESPSEERLEPKREVKEPRKEG). Ser-923 is subject to Phosphoserine. The segment covering 943 to 957 (EEEVPEIQEKEEQEE) has biased composition (acidic residues). The span at 970–980 (ATQTLQANESA) shows a compositional bias: polar residues.

As to quaternary structure, interacts with DNTTIP1. Identified in a histone deacetylase complex that contains DNTTIP1, HDAC1 and MIDEAS; this complex assembles into a tetramer that contains four copies of each protein chain.

The protein resides in the nucleus. The sequence is that of Mitotic deacetylase-associated SANT domain protein from Homo sapiens (Human).